The following is a 727-amino-acid chain: Fatty acid oxidation complex subunit alpha (727 aa).

The enoyl-CoA hydratase stretch occupies residues 1-200 (MNDQQPFSAI…RQGLVDEAVP (200 aa)). Residues 316 to 727 (KPIHYVGILG…PPTDEDDSAS (412 aa)) form a 3-hydroxyacyl-CoA dehydrogenase region.

This sequence in the N-terminal section; belongs to the enoyl-CoA hydratase/isomerase family. In the central section; belongs to the 3-hydroxyacyl-CoA dehydrogenase family. In terms of assembly, heterotetramer of two alpha chains (FadJ) and two beta chains (FadI).

It is found in the cytoplasm. It catalyses the reaction a (3S)-3-hydroxyacyl-CoA = a (2E)-enoyl-CoA + H2O. The enzyme catalyses a 4-saturated-(3S)-3-hydroxyacyl-CoA = a (3E)-enoyl-CoA + H2O. The catalysed reaction is a (3S)-3-hydroxyacyl-CoA + NAD(+) = a 3-oxoacyl-CoA + NADH + H(+). It carries out the reaction (3S)-3-hydroxybutanoyl-CoA = (3R)-3-hydroxybutanoyl-CoA. It participates in lipid metabolism; fatty acid beta-oxidation. In terms of biological role, catalyzes the formation of a hydroxyacyl-CoA by addition of water on enoyl-CoA. Also exhibits 3-hydroxyacyl-CoA epimerase and 3-hydroxyacyl-CoA dehydrogenase activities. The chain is Fatty acid oxidation complex subunit alpha from Pectobacterium carotovorum subsp. carotovorum (strain PC1).